We begin with the raw amino-acid sequence, 67 residues long: Small ribosomal subunit protein eS27 (67 aa).

Zn(2+)-binding residues include C22, C25, C41, and C44. The segment at 22-44 (CPDCGNEQITFSHAAMVVRCLVC) adopts a C4-type zinc-finger fold.

It belongs to the eukaryotic ribosomal protein eS27 family. In terms of assembly, part of the 30S ribosomal subunit. The cofactor is Zn(2+).

This is Small ribosomal subunit protein eS27 from Pyrobaculum aerophilum (strain ATCC 51768 / DSM 7523 / JCM 9630 / CIP 104966 / NBRC 100827 / IM2).